Consider the following 568-residue polypeptide: Glucose-6-phosphate isomerase, cytosolic 1 (568 aa).

The active-site Proton donor is the E360. Active-site residues include H391 and K516.

It belongs to the GPI family. In terms of assembly, homodimer.

Its subcellular location is the cytoplasm. The enzyme catalyses alpha-D-glucose 6-phosphate = beta-D-fructose 6-phosphate. It functions in the pathway carbohydrate degradation; glycolysis; D-glyceraldehyde 3-phosphate and glycerone phosphate from D-glucose: step 2/4. This is Glucose-6-phosphate isomerase, cytosolic 1 (PGIC1) from Clarkia mildrediae.